The following is an 821-amino-acid chain: Bifunctional dethiobiotin synthetase/7,8-diamino-pelargonic acid aminotransferase, mitochondrial (821 aa).

The segment at 28 to 283 (SPAFAVFGAN…VHVLPPIPED (256 aa)) is dethiobiotin synthetase. An ATP-binding site is contributed by 39–44 (GVGKTL). Threonine 43 provides a ligand contact to Mg(2+). Threonine 72 is a binding site for substrate. Glutamate 194 is a Mg(2+) binding site. 194 to 197 (ETAG) lines the ATP pocket. The tract at residues 316-820 (RLNSMQRKSK…AKVHRRLQKL (505 aa)) is 7,8-diamino-pelargonic acid aminotransferase. 374-375 (WW) provides a ligand contact to (8S)-8-amino-7-oxononanoate. A pyridoxal 5'-phosphate-binding site is contributed by 436–437 (GS). Residue tyrosine 482 participates in (8S)-8-amino-7-oxononanoate binding. Aspartate 626 contributes to the pyridoxal 5'-phosphate binding site. (8S)-8-amino-7-oxononanoate-binding residues include lysine 655 and glycine 689. N6-(pyridoxal phosphate)lysine is present on lysine 655. Serine 691 is a pyridoxal 5'-phosphate binding site. (8S)-8-amino-7-oxononanoate is bound at residue arginine 787.

It in the N-terminal section; belongs to the dethiobiotin synthetase family. This sequence in the C-terminal section; belongs to the class-III pyridoxal-phosphate-dependent aminotransferase family. BioA subfamily. Mg(2+) serves as cofactor. It depends on pyridoxal 5'-phosphate as a cofactor.

The protein localises to the mitochondrion. The catalysed reaction is (7R,8S)-7,8-diammoniononanoate + CO2 + ATP = (4R,5S)-dethiobiotin + ADP + phosphate + 3 H(+). It carries out the reaction (8S)-8-amino-7-oxononanoate + S-adenosyl-L-methionine = S-adenosyl-4-methylsulfanyl-2-oxobutanoate + (7R,8S)-7,8-diammoniononanoate. It functions in the pathway cofactor biosynthesis; biotin biosynthesis; biotin from 7,8-diaminononanoate: step 1/2. It participates in cofactor biosynthesis; biotin biosynthesis; 7,8-diaminononanoate from 8-amino-7-oxononanoate (SAM route): step 1/1. Bifunctional enzyme that catalyzes two different reactions involved in the biotin biosynthesis. Its function is as follows. Catalyzes a mechanistically unusual reaction, the ATP-dependent insertion of CO2 between the N7 and N8 nitrogen atoms of 7,8-diaminopelargonic acid (DAPA) to form an ureido ring. In terms of biological role, catalyzes the transfer of the alpha-amino group from S-adenosyl-L-methionine (SAM) to 7-keto-8-aminopelargonic acid (KAPA) to form 7,8-diaminopelargonic acid (DAPA). It is the only aminotransferase known to utilize SAM as an amino donor. The protein is Bifunctional dethiobiotin synthetase/7,8-diamino-pelargonic acid aminotransferase, mitochondrial (BIO3-BIO1) of Oryza sativa subsp. japonica (Rice).